The chain runs to 356 residues: CLIP domain-containing serine protease C9 (356 aa).

The 46-residue stretch at 49-94 (SCDTPQVIGGKCMNISLCDPAFVHSIAYQEHTPVCQQNAFYRVICC) folds into the Clip domain. Intrachain disulfides connect Cys50–Cys93, Cys60–Cys83, Cys66–Cys94, and Cys139–Cys155. An N-linked (GlcNAc...) asparagine glycan is attached at Asn62. The Peptidase S1 domain maps to 109–351 (IMHGIEAEPG…YFGWIKETVS (243 aa)). Residues His154 and Asp194 each act as charge relay system in the active site. Cysteines 258 and 284 form a disulfide. Asn292 carries an N-linked (GlcNAc...) asparagine glycan. Residues Cys300 and Cys328 are joined by a disulfide bond. Ser304 serves as the catalytic Charge relay system.

It belongs to the peptidase S1 family. CLIP subfamily. In the active form, heterodimer of a p12 subunit and a p30 subunit; disulfide-linked. Secreted as a full-length protein. Following bacterium E.coli infection, proteolytically cleaved into two chains, p12 and p30, which remain covalently linked.

It is found in the secreted. Its function is as follows. Probable serine protease which plays an essential role in the innate immune response against bacteria and protozoa infection by activating the melanization cascade. In the susceptible strain G3, appears to be dispensable for ookinete elimination which occurs by lysis. The sequence is that of CLIP domain-containing serine protease C9 from Anopheles gambiae (African malaria mosquito).